Reading from the N-terminus, the 404-residue chain is Exodeoxyribonuclease 7 large subunit (404 aa).

This sequence belongs to the XseA family. Heterooligomer composed of large and small subunits.

The protein resides in the cytoplasm. The catalysed reaction is Exonucleolytic cleavage in either 5'- to 3'- or 3'- to 5'-direction to yield nucleoside 5'-phosphates.. Its function is as follows. Bidirectionally degrades single-stranded DNA into large acid-insoluble oligonucleotides, which are then degraded further into small acid-soluble oligonucleotides. This Mesoplasma florum (strain ATCC 33453 / NBRC 100688 / NCTC 11704 / L1) (Acholeplasma florum) protein is Exodeoxyribonuclease 7 large subunit.